The sequence spans 619 residues: MPKLRSATSTEGRNMAGARALWRATGVKDNDFGKPIIAIANSFTQFVPGHVHLKDMGSLVASAIEEAGGIAKEFNTIAVDDGIAMGHGGMLYSLPSRELIADSVEYMVNAHCADALVCISNCDKITPGMLMAALRLNIPVVFVSGGPMEAGKTKLSDKLIKLDLVDAMVAGADSNVSDEDSAKIERSACPTCGSCSGMFTANSMNCLTEALGLSLPGNGSMLATHADRRELFLEAGRRVMVLAKRYYHQDDESALPRNIANFKAFENAMTLDIAMGGSSNTVLHLLAAAQEADVDFTMADIDRMSRLVPHLCKVAPSTPKYHMEDVHRAGGVMGILGELDRAGLLHTDVFHVAADEGGNLKSVLAKYDVMQTQDEKVKHFFMAGPAGIPTTKAFSQDCRWPSLDNDRQEGCIRSREFAFSQEGGLAVLSGNVAENGCIVKTAGVDESNLTFVGSARVYESQDDAVAGILGGEVVAGDVVVIRYEGPKGGPGMQEMLYPTSYLKSRGLGKACALITDGRFSGGTSGLSIGHVSPEAAAGGTIALIENGDRIEIDIPKRSIKLAISDAELNARREAMLARGPMAWKPIGRERYVSLALKAYAMLATSADKGAVRDRSKLED.

Residue D81 participates in Mg(2+) binding. Position 122 (C122) interacts with [2Fe-2S] cluster. Positions 123 and 124 each coordinate Mg(2+). An N6-carboxylysine modification is found at K124. Residue C195 participates in [2Fe-2S] cluster binding. Position 494 (E494) interacts with Mg(2+). The active-site Proton acceptor is the S520.

Belongs to the IlvD/Edd family. In terms of assembly, homodimer. It depends on [2Fe-2S] cluster as a cofactor. Requires Mg(2+) as cofactor.

The catalysed reaction is (2R)-2,3-dihydroxy-3-methylbutanoate = 3-methyl-2-oxobutanoate + H2O. It carries out the reaction (2R,3R)-2,3-dihydroxy-3-methylpentanoate = (S)-3-methyl-2-oxopentanoate + H2O. It participates in amino-acid biosynthesis; L-isoleucine biosynthesis; L-isoleucine from 2-oxobutanoate: step 3/4. Its pathway is amino-acid biosynthesis; L-valine biosynthesis; L-valine from pyruvate: step 3/4. Functions in the biosynthesis of branched-chain amino acids. Catalyzes the dehydration of (2R,3R)-2,3-dihydroxy-3-methylpentanoate (2,3-dihydroxy-3-methylvalerate) into 2-oxo-3-methylpentanoate (2-oxo-3-methylvalerate) and of (2R)-2,3-dihydroxy-3-methylbutanoate (2,3-dihydroxyisovalerate) into 2-oxo-3-methylbutanoate (2-oxoisovalerate), the penultimate precursor to L-isoleucine and L-valine, respectively. The polypeptide is Dihydroxy-acid dehydratase (Shewanella putrefaciens (strain CN-32 / ATCC BAA-453)).